A 173-amino-acid chain; its full sequence is MPVPQPDGKTPAFGNLYAIGWSAVNFLVLLALMYKFAYGPINNMLEQRTNAIEGSLKHAEEVKLEVEQMRKETASNLAESRKEAQEIVARATKAAEESKNEIIAKAKEESTLIKNKAAAEIQAATEQAKLELKDSAVSLAILAAEKVLSRAINDDDHKNLVKQFVNEAGDLLC.

Residues 12 to 34 form a helical membrane-spanning segment; that stretch reads AFGNLYAIGWSAVNFLVLLALMY.

Belongs to the ATPase B chain family. F-type ATPases have 2 components, F(1) - the catalytic core - and F(0) - the membrane proton channel. F(1) has five subunits: alpha(3), beta(3), gamma(1), delta(1), epsilon(1). F(0) has three main subunits: a(1), b(2) and c(10-14). The alpha and beta chains form an alternating ring which encloses part of the gamma chain. F(1) is attached to F(0) by a central stalk formed by the gamma and epsilon chains, while a peripheral stalk is formed by the delta and b chains.

It is found in the cell membrane. Its function is as follows. F(1)F(0) ATP synthase produces ATP from ADP in the presence of a proton or sodium gradient. F-type ATPases consist of two structural domains, F(1) containing the extramembraneous catalytic core and F(0) containing the membrane proton channel, linked together by a central stalk and a peripheral stalk. During catalysis, ATP synthesis in the catalytic domain of F(1) is coupled via a rotary mechanism of the central stalk subunits to proton translocation. Component of the F(0) channel, it forms part of the peripheral stalk, linking F(1) to F(0). This is ATP synthase subunit b from Syntrophomonas wolfei subsp. wolfei (strain DSM 2245B / Goettingen).